Consider the following 250-residue polypeptide: Enoyl-[acyl-carrier-protein] reductase [NADPH] FabL (250 aa).

NADP(+)-binding positions include 13 to 16, 36 to 38, 62 to 63, and N89; these read SRGV, ARS, and NV. Active-site proton acceptor residues include Y151 and K158. NADP(+)-binding positions include K158 and 187 to 189; that span reads IDT.

The protein belongs to the short-chain dehydrogenases/reductases (SDR) family. Homotetramer.

It catalyses the reaction a 2,3-saturated acyl-[ACP] + NADP(+) = a (2E)-enoyl-[ACP] + NADPH + H(+). The catalysed reaction is (2E)-butenoyl-[ACP] + NADPH + H(+) = butanoyl-[ACP] + NADP(+). It participates in lipid metabolism; fatty acid biosynthesis. Inhibited by triclosan. Its function is as follows. Catalyzes the reduction of a carbon-carbon double bond in an enoyl moiety that is covalently linked to an acyl carrier protein (ACP). It confers resistance to triclosan. This chain is Enoyl-[acyl-carrier-protein] reductase [NADPH] FabL (fabL), found in Bacillus subtilis (strain 168).